Reading from the N-terminus, the 760-residue chain is Prolyl endopeptidase (760 aa).

Residues Ser-609, Asp-693, and His-730 each act as charge relay system in the active site.

This sequence belongs to the peptidase S9A family.

It localises to the cytoplasm. It catalyses the reaction Hydrolysis of Pro-|-Xaa &gt;&gt; Ala-|-Xaa in oligopeptides.. Inhibited by chymostatin, Boc-Glu(NHO-Bz)-Pyrrolidide, Z-Pro-L-prolinal dimethyacetal and the peptide H-H-L-P-P-P-V-OH. Cleaves peptide bonds on the C-terminal side of prolyl residues within peptides that are up to approximately 30 amino acids long. The chain is Prolyl endopeptidase (prep) from Dictyostelium discoideum (Social amoeba).